A 422-amino-acid polypeptide reads, in one-letter code: p-hydroxyphenylacetate 3-hydroxylase, oxygenase component (422 aa).

Trp-112 provides a ligand contact to FMN. Substrate-binding residues include His-120 and Ser-146. FMN is bound by residues 146-148 and 169-171; these read SSI and WSS. 263–266 contributes to the substrate binding site; sequence RPYF. FMN-binding positions include Arg-292, Tyr-296, 374-375, and 396-397; these read AT and HA. Tyr-296 is a substrate binding site.

The protein belongs to the HpaH/HsaA monooxygenase family. As to quaternary structure, homotetramer. The p-hydroxyphenylacetate 3-hydroxylase (HpaH) is composed of an oxygenase component C2 and a reductase component C1.

The enzyme catalyses 4-hydroxyphenylacetate + FMNH2 + O2 = 3,4-dihydroxyphenylacetate + FMN + H2O + H(+). The catalysed reaction is 4-hydroxyphenylacetate + FADH2 + O2 = 3,4-dihydroxyphenylacetate + FAD + H2O + H(+). It functions in the pathway aromatic compound metabolism; 4-hydroxyphenylacetate degradation; pyruvate and succinate semialdehyde from 4-hydroxyphenylacetate: step 1/7. With respect to regulation, inhibited by flavin concentrations greater than 15 uM. Also inhibited by excess p-hydroxyphenylacetate (HPA). Its function is as follows. Oxygenase component of a two-component system that utilizes reduced FMN (FMNH2) supplied by the reductase component to catalyze the hydroxylation of 4-hydroxyphenylacetic acid, leading to the production of 3,4-dihydroxyphenylacetate (3,4-DHPA). Also utilizes other reduced flavins such as FADH2 and reduced riboflavin to a lesser extent. Only the compounds with a hydroxyl group in the para (p-) position can be hydroxylated. May also oxidize phenol to catechol, and hydroxylate other phenol derivatives. The chain is p-hydroxyphenylacetate 3-hydroxylase, oxygenase component from Acinetobacter baumannii.